A 507-amino-acid polypeptide reads, in one-letter code: Protoheme IX farnesyltransferase, mitochondrial (507 aa).

The segment covering 72–90 has biased composition (low complexity); that stretch reads STSASASTTHDSTLSSSPT. The disordered stretch occupies residues 72 to 136; sequence STSASASTTH…RGEKPLPPDA (65 aa). Residues 99–111 show a composition bias toward basic residues; that stretch reads KDHKIAPHRKRQA. 8 helical membrane-spanning segments follow: residues 166 to 186, 199 to 219, 248 to 268, 270 to 290, 298 to 318, 339 to 359, 392 to 412, and 441 to 461; these read LTML…VPEM, PLTL…ANAL, AAVL…YFGV, PTVS…YTPL, TWIG…AAAG, IGGW…FMAL, FVFI…WSFA, and GLFW…LLHK.

Belongs to the UbiA prenyltransferase family.

The protein resides in the mitochondrion membrane. It carries out the reaction heme b + (2E,6E)-farnesyl diphosphate + H2O = Fe(II)-heme o + diphosphate. In terms of biological role, converts protoheme IX and farnesyl diphosphate to heme O. In Gibberella zeae (strain ATCC MYA-4620 / CBS 123657 / FGSC 9075 / NRRL 31084 / PH-1) (Wheat head blight fungus), this protein is Protoheme IX farnesyltransferase, mitochondrial (COX10).